Here is a 480-residue protein sequence, read N- to C-terminus: ATP synthase subunit beta 1 (480 aa).

154–161 (GGAGVGKT) provides a ligand contact to ATP.

It belongs to the ATPase alpha/beta chains family. F-type ATPases have 2 components, CF(1) - the catalytic core - and CF(0) - the membrane proton channel. CF(1) has five subunits: alpha(3), beta(3), gamma(1), delta(1), epsilon(1). CF(0) has four main subunits: a(1), b(1), b'(1) and c(9-12).

It localises to the cell inner membrane. It catalyses the reaction ATP + H2O + 4 H(+)(in) = ADP + phosphate + 5 H(+)(out). Functionally, produces ATP from ADP in the presence of a proton gradient across the membrane. The catalytic sites are hosted primarily by the beta subunits. In Chlorobaculum tepidum (strain ATCC 49652 / DSM 12025 / NBRC 103806 / TLS) (Chlorobium tepidum), this protein is ATP synthase subunit beta 1.